We begin with the raw amino-acid sequence, 477 residues long: Aspartyl/glutamyl-tRNA(Asn/Gln) amidotransferase subunit B (477 aa).

This sequence belongs to the GatB/GatE family. GatB subfamily. Heterotrimer of A, B and C subunits.

It catalyses the reaction L-glutamyl-tRNA(Gln) + L-glutamine + ATP + H2O = L-glutaminyl-tRNA(Gln) + L-glutamate + ADP + phosphate + H(+). The catalysed reaction is L-aspartyl-tRNA(Asn) + L-glutamine + ATP + H2O = L-asparaginyl-tRNA(Asn) + L-glutamate + ADP + phosphate + 2 H(+). Its function is as follows. Allows the formation of correctly charged Asn-tRNA(Asn) or Gln-tRNA(Gln) through the transamidation of misacylated Asp-tRNA(Asn) or Glu-tRNA(Gln) in organisms which lack either or both of asparaginyl-tRNA or glutaminyl-tRNA synthetases. The reaction takes place in the presence of glutamine and ATP through an activated phospho-Asp-tRNA(Asn) or phospho-Glu-tRNA(Gln). This is Aspartyl/glutamyl-tRNA(Asn/Gln) amidotransferase subunit B from Streptococcus sanguinis (strain SK36).